An 85-amino-acid polypeptide reads, in one-letter code: Toxin BmKT (85 aa).

Positions 1–19 are cleaved as a signal peptide; that stretch reads MNYLVFFSLALLLMTGVES. Residues 21–83 form the LCN-type CS-alpha/beta domain; sequence RDGYIADDKN…VPIRVPGKCN (63 aa). 4 disulfides stabilise this stretch: C31/C82, C35/C55, C41/C65, and C45/C67.

The protein belongs to the long (4 C-C) scorpion toxin superfamily. Sodium channel inhibitor family. Alpha subfamily. Expressed by the venom gland.

It is found in the secreted. Its function is as follows. Binds to sodium channels (Nav) and inhibits the inactivation of the activated channels, thereby blocking neuronal transmission. Tested on mice, has antitumor effect and strong inhibitory effect on pain. In Olivierus martensii (Manchurian scorpion), this protein is Toxin BmKT.